The following is a 205-amino-acid chain: MSKKRGLSGEEKRTRMMEIFFETKDVFQLKDLEKLAPKEKGITAMSVKEVLQSLVDDGMVDCERIGTSNYYWAFPSKALHARKRKLEALNSQLSEGSQKHADLQKSIEKARVGRQETEERAMLAKELSSFRDQRQQLKAEVEKYRECDPQVVEEIREANKVAKEAANRWTDNIFAIKSWAKRKFGFEESKIDKNFGIPEDFDYID.

Serine 2 bears the N-acetylserine mark. Positions 83 to 173 (KRKLEALNSQ…EAANRWTDNI (91 aa)) form a coiled coil.

It belongs to the MND1 family. Heterodimer with PSMC3IP/HOP2. MND1-PSMC3IP interacts with DMC1 and RAD51 and binds to ssDNA and dsDNA showing no preference for either form of DNA.

It localises to the nucleus. In terms of biological role, required for proper homologous chromosome pairing and efficient cross-over and intragenic recombination during meiosis. Stimulates both DMC1- and RAD51-mediated homologous strand assimilation, which is required for the resolution of meiotic double-strand breaks. This chain is Meiotic nuclear division protein 1 homolog, found in Mus musculus (Mouse).